Reading from the N-terminus, the 348-residue chain is Isopentenyl-diphosphate delta-isomerase (348 aa).

11 to 12 (RK) serves as a coordination point for substrate. FMN is bound by residues 70–72 (AMT), serine 100, and asparagine 131. A substrate-binding site is contributed by 100–102 (SQR). Position 165 (glutamine 165) interacts with substrate. A Mg(2+)-binding site is contributed by glutamate 166. FMN contacts are provided by residues lysine 197, threonine 231, 278 to 280 (GIR), and 299 to 300 (AR).

This sequence belongs to the IPP isomerase type 2 family. Homooctamer. Dimer of tetramers. Requires FMN as cofactor. NADPH is required as a cofactor. It depends on Mg(2+) as a cofactor.

The protein resides in the cytoplasm. It catalyses the reaction isopentenyl diphosphate = dimethylallyl diphosphate. In terms of biological role, involved in the biosynthesis of isoprenoids. Catalyzes the 1,3-allylic rearrangement of the homoallylic substrate isopentenyl (IPP) to its allylic isomer, dimethylallyl diphosphate (DMAPP). In Mycobacterium marinum (strain ATCC BAA-535 / M), this protein is Isopentenyl-diphosphate delta-isomerase.